A 31-amino-acid polypeptide reads, in one-letter code: Conotoxin Cltx-2 (31 aa).

A 4-hydroxyproline mark is found at Pro6 and Pro31.

Contains 4 disulfide bonds. Expressed by the venom duct.

The protein resides in the secreted. This chain is Conotoxin Cltx-2, found in Californiconus californicus (California cone).